The primary structure comprises 248 residues: Myelin protein P0 (248 aa).

Positions 1–29 are cleaved as a signal peptide; that stretch reads MAPGAPSSSPSPILAALLFSSLVLSPTLA. Residues 30–143 enclose the Ig-like V-type domain; the sequence is IVVYTDREVY…DIVGKTSQVT (114 aa). Over 30-153 the chain is Extracellular; it reads IVVYTDREVY…LYVFEKVPTR (124 aa). Cys-50 and Cys-127 are joined by a disulfide. Asn-122 carries N-linked (GlcNAc...) (complex) asparagine glycosylation. A helical transmembrane segment spans residues 154 to 179; it reads YGVVLGAVIGGILGVVLLLLLLFYLI. The Cytoplasmic segment spans residues 180-248; it reads RYCWLRRQAA…GLGESRKDKK (69 aa). Phosphoserine; by PKC is present on Ser-210. The interval 222-248 is disordered; it reads MLDHSRSTKAASEKKSKGLGESRKDKK. Basic and acidic residues predominate over residues 224 to 248; sequence DHSRSTKAASEKKSKGLGESRKDKK. A phosphoserine mark is found at Ser-226 and Ser-228. Ser-233 is subject to Phosphoserine; by PKC. Phosphoserine is present on Ser-237. Position 243 is a phosphoserine; by PKC (Ser-243).

It belongs to the myelin P0 protein family. In terms of assembly, homodimer and homotetramer. N-glycosylated; contains sulfate-substituted glycan. Found only in peripheral nervous system Schwann cells.

It localises to the cell membrane. Functionally, is an adhesion molecule necessary for normal myelination in the peripheral nervous system. It mediates adhesion between adjacent myelin wraps and ultimately drives myelin compaction. The polypeptide is Myelin protein P0 (Mpz) (Rattus norvegicus (Rat)).